The following is a 1205-amino-acid chain: Plasma membrane calcium-transporting ATPase 4 (1205 aa).

Residues 1-100 (MTNPPGQSVS…KTFLELVWEA (100 aa)) are Cytoplasmic-facing. The chain crosses the membrane as a helical span at residues 101–121 (LQDVTLIILEIAAIISLVLSF). Topologically, residues 122–147 (YRPPGGDNEICGHIASSPEEEEEGET) are extracellular. Residues 148–168 (GWIEGAAILASVIIVVLVTAF) form a helical membrane-spanning segment. The Cytoplasmic portion of the chain corresponds to 169-369 (NDWSKEKQFR…LAVQIGKAGL (201 aa)). The tract at residues 294-318 (DDDDKKKKGKKQGAPENRNKAKTQD) is disordered. Residues Ser-329 and Ser-335 each carry the phosphoserine modification. The helical transmembrane segment at 370 to 390 (IMSVLTVVILILYFVVDNFVI) threads the bilayer. Topologically, residues 391–409 (QRREWLPECTPVYIQYFVK) are extracellular. Residues 410–430 (FFIIGVTVLVVAVPEGLPLAV) traverse the membrane as a helical segment. Topologically, residues 431 to 844 (TISLAYSVKK…RNVYDSISKF (414 aa)) are cytoplasmic. Asp-466 serves as the catalytic 4-aspartylphosphate intermediate. Asp-786 and Asp-790 together coordinate Mg(2+). A helical transmembrane segment spans residues 845–865 (LQFQLTVNVVAVIVAFTGACI). At 866–872 (TQDSPLK) the chain is on the extracellular side. A helical membrane pass occupies residues 873–893 (AVQMLWVNLIMDTFASLALAT). Over 894-919 (EPPTESLLRRRPYGRNKPLISRTMMK) the chain is Cytoplasmic. Residues 920 to 942 (NILGHAVYQLLIVFLLVFAGDTL) form a helical membrane-spanning segment. Topologically, residues 943-956 (FDIDSGRKAPLNSP) are extracellular. Residues 957 to 979 (PSQHYTIVFNTFVLMQLFNEINA) traverse the membrane as a helical segment. Over 980–995 (RKIHGEKNVFAGVYRN) the chain is Cytoplasmic. A helical membrane pass occupies residues 996 to 1016 (IIFCTVVLGTFFCQIMIVELG). Over 1017–1029 (GKPFSCTSLTMEQ) the chain is Extracellular. A helical membrane pass occupies residues 1030-1050 (WMWCLFIGIGELLWGQVISAI). Residues 1051 to 1205 (PTKSLKFLKE…SPLPSLETPV (155 aa)) are Cytoplasmic-facing. A phosphoserine mark is found at Ser-1065 and Ser-1071. Position 1072 is an omega-N-methylarginine (Arg-1072). Residues 1087 to 1104 (LRRGQILWVRGLNRIQTQ) are calmodulin-binding subdomain A. The residue at position 1103 (Thr-1103) is a Phosphothreonine; by PKC. The interval 1105 to 1114 (IRVVKLFHNN) is calmodulin-binding subdomain B. Residue Ser-1145 is modified to Phosphoserine.

The protein belongs to the cation transport ATPase (P-type) (TC 3.A.3) family. Type IIB subfamily. Interacts with PDZD11. Interacts with SLC35G1 and STIM1. Interacts with calmodulin. Specifically expressed by sperm in testis (at protein level).

It localises to the membrane. The protein localises to the cell projection. The protein resides in the cilium. It is found in the flagellum membrane. It catalyses the reaction Ca(2+)(in) + ATP + H2O = Ca(2+)(out) + ADP + phosphate + H(+). Activated by calcium/calmodulin. Calcium/calmodulin-regulated and magnesium-dependent enzyme that catalyzes the hydrolysis of ATP coupled with the transport of calcium out of the cell. By regulating sperm cell calcium homeostasis, may play a role in sperm motility. The protein is Plasma membrane calcium-transporting ATPase 4 of Mus musculus (Mouse).